The following is a 152-amino-acid chain: Deoxyuridine 5'-triphosphate nucleotidohydrolase (152 aa).

Substrate is bound by residues 72-74 (RSG), N85, 89-91 (TID), and K99.

This sequence belongs to the dUTPase family. Requires Mg(2+) as cofactor.

It carries out the reaction dUTP + H2O = dUMP + diphosphate + H(+). Its pathway is pyrimidine metabolism; dUMP biosynthesis; dUMP from dCTP (dUTP route): step 2/2. Functionally, this enzyme is involved in nucleotide metabolism: it produces dUMP, the immediate precursor of thymidine nucleotides and it decreases the intracellular concentration of dUTP so that uracil cannot be incorporated into DNA. The sequence is that of Deoxyuridine 5'-triphosphate nucleotidohydrolase from Bradyrhizobium diazoefficiens (strain JCM 10833 / BCRC 13528 / IAM 13628 / NBRC 14792 / USDA 110).